A 314-amino-acid polypeptide reads, in one-letter code: Ferrochelatase (314 aa).

Fe cation-binding residues include His188 and Glu269.

This sequence belongs to the ferrochelatase family.

It is found in the cytoplasm. The enzyme catalyses heme b + 2 H(+) = protoporphyrin IX + Fe(2+). It functions in the pathway porphyrin-containing compound metabolism; protoheme biosynthesis; protoheme from protoporphyrin-IX: step 1/1. In terms of biological role, catalyzes the ferrous insertion into protoporphyrin IX. The chain is Ferrochelatase from Campylobacter fetus subsp. fetus (strain 82-40).